The primary structure comprises 396 residues: S-adenosylmethionine synthase (396 aa).

His15 serves as a coordination point for ATP. Mg(2+) is bound at residue Asp17. Glu43 serves as a coordination point for K(+). 2 residues coordinate L-methionine: Glu56 and Gln99. The tract at residues 99–109 is flexible loop; it reads QSPDIALGVNR. Residues 175 to 177, 241 to 242, Asp250, 256 to 257, Ala273, and Lys277 contribute to the ATP site; these read DGK, RF, and RK. An L-methionine-binding site is contributed by Asp250. Lys281 contacts L-methionine.

Belongs to the AdoMet synthase family. As to quaternary structure, homotetramer; dimer of dimers. Mg(2+) serves as cofactor. The cofactor is K(+).

The protein resides in the cytoplasm. It catalyses the reaction L-methionine + ATP + H2O = S-adenosyl-L-methionine + phosphate + diphosphate. Its pathway is amino-acid biosynthesis; S-adenosyl-L-methionine biosynthesis; S-adenosyl-L-methionine from L-methionine: step 1/1. Functionally, catalyzes the formation of S-adenosylmethionine (AdoMet) from methionine and ATP. The overall synthetic reaction is composed of two sequential steps, AdoMet formation and the subsequent tripolyphosphate hydrolysis which occurs prior to release of AdoMet from the enzyme. This chain is S-adenosylmethionine synthase, found in Carboxydothermus hydrogenoformans (strain ATCC BAA-161 / DSM 6008 / Z-2901).